Reading from the N-terminus, the 98-residue chain is Large ribosomal subunit protein uL23 (98 aa).

The protein belongs to the universal ribosomal protein uL23 family. Part of the 50S ribosomal subunit. Contacts protein L29, and trigger factor when it is bound to the ribosome.

One of the early assembly proteins it binds 23S rRNA. One of the proteins that surrounds the polypeptide exit tunnel on the outside of the ribosome. Forms the main docking site for trigger factor binding to the ribosome. The polypeptide is Large ribosomal subunit protein uL23 (Streptococcus gordonii (strain Challis / ATCC 35105 / BCRC 15272 / CH1 / DL1 / V288)).